Reading from the N-terminus, the 528-residue chain is Sodium-dependent lysophosphatidylcholine symporter 1 (528 aa).

Residues 1–37 (MAGGGGAERVRVGAAAAGLLPPSCRQPRRRESRERLS) lie on the Cytoplasmic side of the membrane. A helical transmembrane segment spans residues 38–66 (VCSKLCYAVGGAPYQTTGCALGFFLQIYL). The Extracellular portion of the chain corresponds to 67–73 (LDVAQLD). Residues 74-99 (PFYASIILFVGRAWDAITDPMVGFFI) form a helical membrane-spanning segment. At 100–109 (SKTPWTRFGR) the chain is on the cytoplasmic side. The helical transmembrane segment at 110-129 (LMPWIIFSTPFAVISYFLIW) threads the bilayer. The Extracellular segment spans residues 130–138 (FVPDISTGQ). The chain crosses the membrane as a helical span at residues 139-161 (VMWYLIFYCIFQTLVTCFHVPYS). The Cytoplasmic portion of the chain corresponds to 162 to 176 (ALTMFISREQSERDS). Residues 177–199 (ATAYRMTVEVLGTVLGTAIQGQI) traverse the membrane as a helical segment. Topologically, residues 200–241 (VGKAVTPCIENPPFLSETNFSVAIRNVNMTHYTGSLADTRNA) are extracellular. Cysteine 207 and cysteine 460 are joined by a disulfide. Residues asparagine 218 and asparagine 227 are each glycosylated (N-linked (GlcNAc...) asparagine). A helical membrane pass occupies residues 242–263 (YMVAAGVIGGLYILCAVILSVG). The Cytoplasmic segment spans residues 264 to 295 (VREKRESSELQSDEPVSFFRGLKLVMNHGAYI). The chain crosses the membrane as a helical span at residues 296 to 319 (KLITGFLFTSLAFMLLEGNFALFC). Residues 320–328 (TYTLGFRNE) lie on the Extracellular side of the membrane. The helical transmembrane segment at 329–351 (FQNILLAIMLSATLTIPFWQWFL) threads the bilayer. Over 352 to 355 (TRFG) the chain is Cytoplasmic. A helical membrane pass occupies residues 356–376 (KKTAVYVGISSAVPFLITVVV). The Extracellular portion of the chain corresponds to 377–381 (LDSNL). The chain crosses the membrane as a helical span at residues 382 to 404 (VVTYIVAVAAGISVAAAFLLPWS). Residues 405 to 427 (MLPDVIDDFKLQHPESRGHEAIF) lie on the Cytoplasmic side of the membrane. Residues 428 to 450 (FSFYVFFTKFTSGVSLGISTLSL) traverse the membrane as a helical segment. Topologically, residues 451-467 (DFAGYQTRGCSQPSEVN) are extracellular. The helical transmembrane segment at 468–490 (ITLKLLVSAVPVGLILLGLLLFK) threads the bilayer. At 491 to 528 (LYPIDEEKRRENKKALQDLREESNSSSESDSTELANIV) the chain is on the cytoplasmic side. Over residues 503-513 (KKALQDLREES) the composition is skewed to basic and acidic residues. The tract at residues 503–528 (KKALQDLREESNSSSESDSTELANIV) is disordered. Residues 514 to 528 (NSSSESDSTELANIV) are compositionally biased toward low complexity.

Belongs to the major facilitator superfamily.

The protein resides in the cell membrane. The protein localises to the endoplasmic reticulum membrane. The enzyme catalyses a 1-acyl-sn-glycero-3-phosphocholine(in) + Na(+)(in) = a 1-acyl-sn-glycero-3-phosphocholine(out) + Na(+)(out). It catalyses the reaction 1-(4Z,7Z,10Z,13Z,16Z,19Z-docosahexaenoyl)-sn-glycero-3-phosphocholine(in) + Na(+)(in) = 1-(4Z,7Z,10Z,13Z,16Z,19Z-docosahexaenoyl)-sn-glycero-3-phosphocholine(out) + Na(+)(out). The catalysed reaction is 1-(9Z-octadecenoyl)-sn-glycero-3-phosphocholine(in) + Na(+)(in) = 1-(9Z-octadecenoyl)-sn-glycero-3-phosphocholine(out) + Na(+)(out). It carries out the reaction 1-hexadecanoyl-sn-glycero-3-phosphocholine(in) + Na(+)(in) = 1-hexadecanoyl-sn-glycero-3-phosphocholine(out) + Na(+)(out). The enzyme catalyses a 1-acyl-sn-glycero-3-phosphoethanolamine(in) + Na(+)(in) = a 1-acyl-sn-glycero-3-phosphoethanolamine(out) + Na(+)(out). Its function is as follows. Sodium-dependent lysophosphatidylcholine (LPC) symporter, which plays an essential role for blood-brain barrier formation and function. Specifically expressed in endothelium of the blood-brain barrier of micro-vessels and transports LPC into the brain. Transport of LPC is essential because it constitutes the major mechanism by which docosahexaenoic acid (DHA), an omega-3 fatty acid that is essential for normal brain growth and cognitive function, enters the brain. Transports LPC carrying long-chain fatty acids such LPC oleate and LPC palmitate with a minimum acyl chain length of 14 carbons. Does not transport docosahexaenoic acid in unesterified fatty acid. This is Sodium-dependent lysophosphatidylcholine symporter 1 from Gallus gallus (Chicken).